A 328-amino-acid polypeptide reads, in one-letter code: Carbonic anhydrase-related protein 11 (328 aa).

Positions 1–23 are cleaved as a signal peptide; that stretch reads MGGAARLSAPQALVLWAALGAAA. Residues 33 to 303 enclose the Alpha-carbonic anhydrase domain; that stretch reads DWWSYKENLQ…LAHRALRGNR (271 aa). N118 carries N-linked (GlcNAc...) asparagine glycosylation. A disordered region spans residues 300 to 328; sequence RGNRDPRHPERRCRGPNYRLHVDGGPHGR. Residues 319–328 show a composition bias toward basic and acidic residues; that stretch reads LHVDGGPHGR.

The protein belongs to the alpha-carbonic anhydrase family.

The protein localises to the secreted. Does not have a catalytic activity. This is Carbonic anhydrase-related protein 11 (Ca11) from Mus musculus (Mouse).